We begin with the raw amino-acid sequence, 546 residues long: Chaperonin GroEL (546 aa).

Residues 30–33 (TLGP), Lys-51, 87–91 (DGTTT), Gly-415, 479–481 (NAA), and Asp-495 each bind ATP. The disordered stretch occupies residues 525–546 (PEPKKDMPPMPGGGMGGMGGMY). Residues 536–546 (GGGMGGMGGMY) are compositionally biased toward gly residues.

Belongs to the chaperonin (HSP60) family. In terms of assembly, forms a cylinder of 14 subunits composed of two heptameric rings stacked back-to-back. Interacts with the co-chaperonin GroES.

The protein resides in the cytoplasm. It carries out the reaction ATP + H2O + a folded polypeptide = ADP + phosphate + an unfolded polypeptide.. In terms of biological role, together with its co-chaperonin GroES, plays an essential role in assisting protein folding. The GroEL-GroES system forms a nano-cage that allows encapsulation of the non-native substrate proteins and provides a physical environment optimized to promote and accelerate protein folding. The chain is Chaperonin GroEL from Solidesulfovibrio magneticus (strain ATCC 700980 / DSM 13731 / RS-1) (Desulfovibrio magneticus).